Reading from the N-terminus, the 380-residue chain is Putative T-box protein 40 (380 aa).

A DNA-binding region (T-box) is located at residues 11 to 192; the sequence is MAEEDRWLTQ…KNATFENRLD (182 aa). The disordered stretch occupies residues 188-215; it reads ENRLDGGNKRKNTNSREEPSSKRSKNET. Residues 189-215 are compositionally biased toward basic and acidic residues; the sequence is NRLDGGNKRKNTNSREEPSSKRSKNET.

The protein localises to the nucleus. In Caenorhabditis elegans, this protein is Putative T-box protein 40 (tbx-40).